The following is a 71-amino-acid chain: Small ribosomal subunit protein bS21 (71 aa).

The protein belongs to the bacterial ribosomal protein bS21 family.

The polypeptide is Small ribosomal subunit protein bS21 (Thioalkalivibrio sulfidiphilus (strain HL-EbGR7)).